A 111-amino-acid chain; its full sequence is Large ribosomal subunit protein bL20c (111 aa).

Belongs to the bacterial ribosomal protein bL20 family.

It is found in the plastid. It localises to the chloroplast. Its function is as follows. Binds directly to 23S ribosomal RNA and is necessary for the in vitro assembly process of the 50S ribosomal subunit. It is not involved in the protein synthesizing functions of that subunit. This chain is Large ribosomal subunit protein bL20c, found in Ostreococcus tauri.